A 616-amino-acid polypeptide reads, in one-letter code: Dihydroxy-acid dehydratase (616 aa).

Asp81 lines the Mg(2+) pocket. Position 122 (Cys122) interacts with [2Fe-2S] cluster. Mg(2+)-binding residues include Asp123 and Lys124. Lys124 carries the N6-carboxylysine modification. Cys195 is a binding site for [2Fe-2S] cluster. Glu491 is a binding site for Mg(2+). Ser517 acts as the Proton acceptor in catalysis.

Belongs to the IlvD/Edd family. Homodimer. The cofactor is [2Fe-2S] cluster. It depends on Mg(2+) as a cofactor.

The enzyme catalyses (2R)-2,3-dihydroxy-3-methylbutanoate = 3-methyl-2-oxobutanoate + H2O. It carries out the reaction (2R,3R)-2,3-dihydroxy-3-methylpentanoate = (S)-3-methyl-2-oxopentanoate + H2O. It participates in amino-acid biosynthesis; L-isoleucine biosynthesis; L-isoleucine from 2-oxobutanoate: step 3/4. Its pathway is amino-acid biosynthesis; L-valine biosynthesis; L-valine from pyruvate: step 3/4. Its function is as follows. Functions in the biosynthesis of branched-chain amino acids. Catalyzes the dehydration of (2R,3R)-2,3-dihydroxy-3-methylpentanoate (2,3-dihydroxy-3-methylvalerate) into 2-oxo-3-methylpentanoate (2-oxo-3-methylvalerate) and of (2R)-2,3-dihydroxy-3-methylbutanoate (2,3-dihydroxyisovalerate) into 2-oxo-3-methylbutanoate (2-oxoisovalerate), the penultimate precursor to L-isoleucine and L-valine, respectively. The chain is Dihydroxy-acid dehydratase from Pectobacterium atrosepticum (strain SCRI 1043 / ATCC BAA-672) (Erwinia carotovora subsp. atroseptica).